The sequence spans 147 residues: Nucleoside diphosphate kinase (147 aa).

ATP contacts are provided by Lys11, Phe59, Arg87, Thr93, Arg104, and Asn114. His117 acts as the Pros-phosphohistidine intermediate in catalysis.

The protein belongs to the NDK family. The cofactor is Mg(2+).

The protein localises to the cytoplasm. The enzyme catalyses a 2'-deoxyribonucleoside 5'-diphosphate + ATP = a 2'-deoxyribonucleoside 5'-triphosphate + ADP. It catalyses the reaction a ribonucleoside 5'-diphosphate + ATP = a ribonucleoside 5'-triphosphate + ADP. Functionally, major role in the synthesis of nucleoside triphosphates other than ATP. The ATP gamma phosphate is transferred to the NDP beta phosphate via a ping-pong mechanism, using a phosphorylated active-site intermediate. The sequence is that of Nucleoside diphosphate kinase from Sulfurisphaera tokodaii (strain DSM 16993 / JCM 10545 / NBRC 100140 / 7) (Sulfolobus tokodaii).